Consider the following 570-residue polypeptide: Dihydroxy-acid dehydratase (570 aa).

The segment at M1 to G25 is disordered. C60 is a [2Fe-2S] cluster binding site. D92 serves as a coordination point for Mg(2+). C133 is a binding site for [2Fe-2S] cluster. D134 and K135 together coordinate Mg(2+). K135 carries the N6-carboxylysine modification. C202 contributes to the [2Fe-2S] cluster binding site. E453 contributes to the Mg(2+) binding site. The active-site Proton acceptor is the S479.

The protein belongs to the IlvD/Edd family. As to quaternary structure, homodimer. It depends on [2Fe-2S] cluster as a cofactor. Mg(2+) serves as cofactor.

It catalyses the reaction (2R)-2,3-dihydroxy-3-methylbutanoate = 3-methyl-2-oxobutanoate + H2O. It carries out the reaction (2R,3R)-2,3-dihydroxy-3-methylpentanoate = (S)-3-methyl-2-oxopentanoate + H2O. It participates in amino-acid biosynthesis; L-isoleucine biosynthesis; L-isoleucine from 2-oxobutanoate: step 3/4. It functions in the pathway amino-acid biosynthesis; L-valine biosynthesis; L-valine from pyruvate: step 3/4. Functions in the biosynthesis of branched-chain amino acids. Catalyzes the dehydration of (2R,3R)-2,3-dihydroxy-3-methylpentanoate (2,3-dihydroxy-3-methylvalerate) into 2-oxo-3-methylpentanoate (2-oxo-3-methylvalerate) and of (2R)-2,3-dihydroxy-3-methylbutanoate (2,3-dihydroxyisovalerate) into 2-oxo-3-methylbutanoate (2-oxoisovalerate), the penultimate precursor to L-isoleucine and L-valine, respectively. The protein is Dihydroxy-acid dehydratase of Chromohalobacter salexigens (strain ATCC BAA-138 / DSM 3043 / CIP 106854 / NCIMB 13768 / 1H11).